We begin with the raw amino-acid sequence, 140 residues long: Methylglyoxal synthase (140 aa).

Residues 1–140 (MRSKPRIALI…DQAAADDAAP (140 aa)) enclose the MGS-like domain. Substrate-binding positions include H12, K16, 38–41 (TGTT), and 58–59 (SG). Residue D64 is the Proton donor/acceptor of the active site. Position 91 (H91) interacts with substrate.

This sequence belongs to the methylglyoxal synthase family.

It catalyses the reaction dihydroxyacetone phosphate = methylglyoxal + phosphate. Its function is as follows. Catalyzes the formation of methylglyoxal from dihydroxyacetone phosphate. In Cupriavidus metallidurans (strain ATCC 43123 / DSM 2839 / NBRC 102507 / CH34) (Ralstonia metallidurans), this protein is Methylglyoxal synthase.